The primary structure comprises 1051 residues: Putative helicase/primase complex protein (1051 aa).

The protein belongs to the asfivirus F1055L family.

May be involved in DNA replication. This chain is Putative helicase/primase complex protein, found in Ornithodoros (relapsing fever ticks).